Reading from the N-terminus, the 289-residue chain is Acetyl-coenzyme A carboxylase carboxyl transferase subunit beta (289 aa).

Residues 34-289 enclose the CoA carboxyltransferase N-terminal domain; it reads MWVKCNKCGE…KLINMHQNSF (256 aa). 4 residues coordinate Zn(2+): cysteine 38, cysteine 41, cysteine 57, and cysteine 60. Residues 38–60 form a C4-type zinc finger; sequence CNKCGEILYQNDLEKNYMVCNLC.

This sequence belongs to the AccD/PCCB family. In terms of assembly, acetyl-CoA carboxylase is a heterohexamer composed of biotin carboxyl carrier protein (AccB), biotin carboxylase (AccC) and two subunits each of ACCase subunit alpha (AccA) and ACCase subunit beta (AccD). Requires Zn(2+) as cofactor.

It localises to the cytoplasm. The catalysed reaction is N(6)-carboxybiotinyl-L-lysyl-[protein] + acetyl-CoA = N(6)-biotinyl-L-lysyl-[protein] + malonyl-CoA. Its pathway is lipid metabolism; malonyl-CoA biosynthesis; malonyl-CoA from acetyl-CoA: step 1/1. Its function is as follows. Component of the acetyl coenzyme A carboxylase (ACC) complex. Biotin carboxylase (BC) catalyzes the carboxylation of biotin on its carrier protein (BCCP) and then the CO(2) group is transferred by the transcarboxylase to acetyl-CoA to form malonyl-CoA. In Clostridium botulinum (strain ATCC 19397 / Type A), this protein is Acetyl-coenzyme A carboxylase carboxyl transferase subunit beta.